The sequence spans 160 residues: Nucleotide-binding protein VV1_2655 (160 aa).

This sequence belongs to the YajQ family.

Its function is as follows. Nucleotide-binding protein. This chain is Nucleotide-binding protein VV1_2655, found in Vibrio vulnificus (strain CMCP6).